The following is a 400-amino-acid chain: Argininosuccinate synthase (400 aa).

Position 10-18 (10-18) interacts with ATP; that stretch reads AFSGGLDTT. Y87 contributes to the L-citrulline binding site. G117 serves as a coordination point for ATP. Positions 119, 123, and 124 each coordinate L-aspartate. Residue N123 coordinates L-citrulline. L-citrulline-binding residues include R127, S173, S182, E255, and Y267.

This sequence belongs to the argininosuccinate synthase family. Type 1 subfamily. In terms of assembly, homotetramer.

Its subcellular location is the cytoplasm. It catalyses the reaction L-citrulline + L-aspartate + ATP = 2-(N(omega)-L-arginino)succinate + AMP + diphosphate + H(+). It functions in the pathway amino-acid biosynthesis; L-arginine biosynthesis; L-arginine from L-ornithine and carbamoyl phosphate: step 2/3. The polypeptide is Argininosuccinate synthase (Natronomonas pharaonis (strain ATCC 35678 / DSM 2160 / CIP 103997 / JCM 8858 / NBRC 14720 / NCIMB 2260 / Gabara) (Halobacterium pharaonis)).